A 394-amino-acid chain; its full sequence is Phosphopentomutase (394 aa).

Residues aspartate 14, aspartate 287, histidine 292, aspartate 328, histidine 329, and histidine 340 each coordinate Mn(2+).

Belongs to the phosphopentomutase family. The cofactor is Mn(2+).

The protein resides in the cytoplasm. It catalyses the reaction 2-deoxy-alpha-D-ribose 1-phosphate = 2-deoxy-D-ribose 5-phosphate. The catalysed reaction is alpha-D-ribose 1-phosphate = D-ribose 5-phosphate. It participates in carbohydrate degradation; 2-deoxy-D-ribose 1-phosphate degradation; D-glyceraldehyde 3-phosphate and acetaldehyde from 2-deoxy-alpha-D-ribose 1-phosphate: step 1/2. Its function is as follows. Isomerase that catalyzes the conversion of deoxy-ribose 1-phosphate (dRib-1-P) and ribose 1-phosphate (Rib-1-P) to deoxy-ribose 5-phosphate (dRib-5-P) and ribose 5-phosphate (Rib-5-P), respectively. This chain is Phosphopentomutase, found in Shouchella clausii (strain KSM-K16) (Alkalihalobacillus clausii).